A 145-amino-acid chain; its full sequence is Trafficking protein particle complex subunit 1 (145 aa).

This sequence belongs to the TRAPP small subunits family. BET5 subfamily. Part of the multisubunit transport protein particle (TRAPP) complex. The heterodimer TRAPPC6B-TRAPPC3 interacts with TRAPPC1 likely providing a core for TRAPP complex formation.

The protein resides in the golgi apparatus. It localises to the cis-Golgi network. The protein localises to the endoplasmic reticulum. May play a role in vesicular transport from endoplasmic reticulum to Golgi. This is Trafficking protein particle complex subunit 1 (TRAPPC1) from Bos taurus (Bovine).